Consider the following 200-residue polypeptide: MSRYRGPRTKIIRRLGALPGLTSKILELESGYIGQSTPNKKVSQYRIRLEEKQKLRFHYGLTERQLLKYVRIARKAKGSTGQILSQTLEMRLDNIIFRLGMSPTIPGARQLVNHRHILINDNTVDIPSYNCEPKDVITVNNRKESVIIKNMDSSRKPKVPNHLTFDSIRFRGSVNQTIDRECIDLKINELLVVEYYSRQV.

The region spanning 90–150 is the S4 RNA-binding domain; the sequence is MRLDNIIFRL…NRKESVIIKN (61 aa).

The protein belongs to the universal ribosomal protein uS4 family. Part of the 30S ribosomal subunit. Contacts protein S5. The interaction surface between S4 and S5 is involved in control of translational fidelity.

It localises to the plastid. The protein localises to the chloroplast. Its function is as follows. One of the primary rRNA binding proteins, it binds directly to 16S rRNA where it nucleates assembly of the body of the 30S subunit. In terms of biological role, with S5 and S12 plays an important role in translational accuracy. The chain is Small ribosomal subunit protein uS4c (rps4) from Pellia neesiana (Liverwort).